Here is a 466-residue protein sequence, read N- to C-terminus: Asparagine--tRNA ligase (466 aa).

The protein belongs to the class-II aminoacyl-tRNA synthetase family. Homodimer.

Its subcellular location is the cytoplasm. It carries out the reaction tRNA(Asn) + L-asparagine + ATP = L-asparaginyl-tRNA(Asn) + AMP + diphosphate + H(+). In Wigglesworthia glossinidia brevipalpis, this protein is Asparagine--tRNA ligase.